A 184-amino-acid polypeptide reads, in one-letter code: Homeobox protein LOX10 (184 aa).

Disordered regions lie at residues 1 to 29 (KIVSRWMGSQNNHQQTHPNHHHHLPPLQH) and 129 to 184 (YKTK…NKPG). A DNA-binding region (homeobox) is located at residues 76 to 135 (RRKRRILFSQAQIYELERRFRQQKYLSAPEREHLATFIGLTPTQVKIWFQNHRYKTKKSK). Low complexity-rich tracts occupy residues 140 to 161 (NSPSSSSMTSSSSASNKVASTT) and 174 to 184 (SNTTNNNNKPG).

Belongs to the NK-2 homeobox family. In terms of tissue distribution, expressed in a segmental pattern in the endoderm and in the cephalic nervous system.

The protein resides in the nucleus. Functionally, may play a role in patterning the gut. This chain is Homeobox protein LOX10 (LOX10), found in Helobdella triserialis (Leech).